We begin with the raw amino-acid sequence, 484 residues long: Monocarboxylate transporter 2 (484 aa).

Topologically, residues 1–16 (MPAPTAVPPPHPLPPD) are cytoplasmic. Residues 17 to 37 (GGWGWVVVGASFISIGFSYAF) traverse the membrane as a helical segment. At 38-60 (PKSVTVFFKDIQEIFRAGHSKVA) the chain is on the extracellular side. The chain crosses the membrane as a helical span at residues 61–81 (WISSIMLAVMYAGGPISSVLV). Residues 82 to 87 (NKYGSR) are Cytoplasmic-facing. Residues 88 to 108 (PVVVIGGLLCCTGMILASFST) traverse the membrane as a helical segment. Over 109–116 (SMIQLYLT) the chain is Extracellular. The chain crosses the membrane as a helical span at residues 117 to 137 (IGFISGLGLAFNLQPALTILG). Over 138 to 144 (KYFYRRR) the chain is Cytoplasmic. Residues 145–165 (PLASGLAMTGSPVFLSSLAPF) traverse the membrane as a helical segment. Topologically, residues 166–174 (NQYLFNSYG) are extracellular. A helical membrane pass occupies residues 175–195 (LKGSFLILGGIFLHSCVAGSL). The Cytoplasmic portion of the chain corresponds to 196–245 (MRPVGTSQQSPKSKSKVSSRHDSSTKKAPKLTLAQRINMFLDFSLFKHRG). The segment at 198-223 (PVGTSQQSPKSKSKVSSRHDSSTKKA) is disordered. A helical transmembrane segment spans residues 246-266 (FLIYLSGNVIMFLGFFAPVIF). Residues 267–281 (LSPYAKNRGVDDYKA) are Extracellular-facing. The helical transmembrane segment at 282 to 302 (AYLLSVMAFVDMFSRPCGGLI) threads the bilayer. The Cytoplasmic segment spans residues 303–311 (ANTRLVRPR). A helical membrane pass occupies residues 312-332 (IQYFFSLAIVFTGVCHLLCPL). The Extracellular segment spans residues 333-337 (AESYT). The helical transmembrane segment at 338 to 358 (ALVVYAIFFGYGFGSVSSILF) threads the bilayer. Topologically, residues 359–372 (ETLMDLVGPARFSS) are cytoplasmic. Residues 373–393 (AVGLVTIVECCPVLLGPPLAG) traverse the membrane as a helical segment. Topologically, residues 394 to 405 (KLVDETGEHKYL) are extracellular. Residues 406–426 (FVASGAIVVLAGIWLFIGNAI) traverse the membrane as a helical segment. Over 427-484 (NYRLLAKERKREKARKKKSPNRHSKELESLSKSNQDDVAVRVPQAHRSPSDKERESNI) the chain is Cytoplasmic. Positions 437 to 484 (REKARKKKSPNRHSKELESLSKSNQDDVAVRVPQAHRSPSDKERESNI) are disordered. Residues 438–448 (EKARKKKSPNR) are compositionally biased toward basic residues. Basic and acidic residues-rich tracts occupy residues 449–465 (HSKE…DDVA) and 474–484 (SPSDKERESNI).

Belongs to the major facilitator superfamily. Monocarboxylate porter (TC 2.A.1.13) family. As to quaternary structure, homodimer. Interacts with GRID2IP. Interacts with EMB; interaction mediates SLC16A7 targeting to the plasma membrane. Interacts with isoform 2 of BSG.

The protein resides in the cell membrane. Its subcellular location is the basolateral cell membrane. It is found in the cytoplasm. It carries out the reaction 3-methyl-2-oxobutanoate(out) + H(+)(out) = 3-methyl-2-oxobutanoate(in) + H(+)(in). The enzyme catalyses (S)-lactate(in) + H(+)(in) = (S)-lactate(out) + H(+)(out). The catalysed reaction is acetoacetate(out) + H(+)(out) = acetoacetate(in) + H(+)(in). It catalyses the reaction (R)-3-hydroxybutanoate(out) + H(+)(out) = (R)-3-hydroxybutanoate(in) + H(+)(in). It carries out the reaction 4-methyl-2-oxopentanoate(out) + H(+)(out) = 4-methyl-2-oxopentanoate(in) + H(+)(in). The enzyme catalyses pyruvate(out) + H(+)(out) = pyruvate(in) + H(+)(in). The catalysed reaction is (S)-3-hydroxybutanoate(out) + H(+)(out) = (S)-3-hydroxybutanoate(in) + H(+)(in). Transport activity exhibits steep dependence on substrate concentration. Substrate concentration sensitivity of SLC16A7 arises from the strong inter-subunit cooperativity of the SLC16A7 dimer during transport. Inhibited by AR-C155858. Its function is as follows. Proton-coupled monocarboxylate symporter. Catalyzes the rapid transport across the plasma membrane of monocarboxylates such as L-lactate, pyruvate and ketone bodies, acetoacetate, beta-hydroxybutyrate and acetate. Dimerization is functionally required and both subunits work cooperatively in transporting substrate. This chain is Monocarboxylate transporter 2 (SLC16A7), found in Meriones unguiculatus (Mongolian jird).